We begin with the raw amino-acid sequence, 217 residues long: 3,4-dihydroxy-2-butanone 4-phosphate synthase (217 aa).

D-ribulose 5-phosphate-binding positions include 37–38 (RE), aspartate 42, 150–154 (RGGHT), and glutamate 174. Glutamate 38 is a Mg(2+) binding site. Histidine 153 is a binding site for Mg(2+).

The protein belongs to the DHBP synthase family. Homodimer. The cofactor is Mg(2+). Requires Mn(2+) as cofactor.

It carries out the reaction D-ribulose 5-phosphate = (2S)-2-hydroxy-3-oxobutyl phosphate + formate + H(+). Its pathway is cofactor biosynthesis; riboflavin biosynthesis; 2-hydroxy-3-oxobutyl phosphate from D-ribulose 5-phosphate: step 1/1. Its function is as follows. Catalyzes the conversion of D-ribulose 5-phosphate to formate and 3,4-dihydroxy-2-butanone 4-phosphate. This Klebsiella pneumoniae (strain 342) protein is 3,4-dihydroxy-2-butanone 4-phosphate synthase.